Consider the following 469-residue polypeptide: Relaxin-3 receptor 1 (469 aa).

The Extracellular portion of the chain corresponds to 1-81 (MQMADAATIA…ESADTEARVR (81 aa)). 2 N-linked (GlcNAc...) asparagine glycosylation sites follow: N36 and N40. The helical transmembrane segment at 82–102 (ILISVVYWVVCALGLAGNLLV) threads the bilayer. Residues 103–119 (LYLMKSMQGWRKSSINL) are Cytoplasmic-facing. Residues 120–140 (FVTNLALTDFQFVLTLPFWAV) traverse the membrane as a helical segment. Topologically, residues 141–156 (ENALDFKWPFGKAMCK) are extracellular. A disulfide bond links C155 and C247. The helical transmembrane segment at 157–177 (IVSMVTSMNMYASVFFLTAMS) threads the bilayer. Topologically, residues 178-215 (VTRYHSVASALKSHRTRGHGRGDCCGRSLGDSCCFSAK) are cytoplasmic. Residues 216 to 236 (ALCVWIWALAALASLPSAIFS) form a helical membrane-spanning segment. The Extracellular segment spans residues 237–270 (TTVKVMGEELCLVRFPDKLLGRDRQFWLGLYHSQ). A helical transmembrane segment spans residues 271-291 (KVLLGFVLPLGIIILCYLLLV). Residues 292-329 (RFIADRRAAGTKGGAAVAGGRPTGASARRLSKVTKSVT) lie on the Cytoplasmic side of the membrane. The helical transmembrane segment at 330–350 (IVVLSFFLCWLPNQALTTWSI) threads the bilayer. The Extracellular portion of the chain corresponds to 351-356 (LIKFNA). The helical transmembrane segment at 357–377 (VPFSQEYFLCQVYAFPVSVCL) threads the bilayer. Topologically, residues 378 to 469 (AHSNSCLNPV…YDLLPSSSAY (92 aa)) are cytoplasmic.

Belongs to the G-protein coupled receptor 1 family. As to expression, expressed predominantly in brain regions. Highest expression in substantia nigra and pituitary, followed by hippocampus, spinal cord, amygdala, caudate nucleus and corpus callosum, quite low level in cerebellum. In peripheral tissues, relatively high levels in adrenal glands, low levels in pancreas, salivary gland, placenta, mammary gland and testis.

It localises to the cell membrane. Its function is as follows. Receptor for RNL3/relaxin-3. Binding of the ligand inhibit cAMP accumulation. In Homo sapiens (Human), this protein is Relaxin-3 receptor 1 (RXFP3).